The sequence spans 932 residues: Glycine dehydrogenase (decarboxylating) (932 aa).

Lys-685 carries the N6-(pyridoxal phosphate)lysine modification.

The protein belongs to the GcvP family. In terms of assembly, the glycine cleavage system is composed of four proteins: P, T, L and H. The cofactor is pyridoxal 5'-phosphate.

The enzyme catalyses N(6)-[(R)-lipoyl]-L-lysyl-[glycine-cleavage complex H protein] + glycine + H(+) = N(6)-[(R)-S(8)-aminomethyldihydrolipoyl]-L-lysyl-[glycine-cleavage complex H protein] + CO2. Its function is as follows. The glycine cleavage system catalyzes the degradation of glycine. The P protein binds the alpha-amino group of glycine through its pyridoxal phosphate cofactor; CO(2) is released and the remaining methylamine moiety is then transferred to the lipoamide cofactor of the H protein. This chain is Glycine dehydrogenase (decarboxylating), found in Brucella abortus (strain S19).